A 1083-amino-acid polypeptide reads, in one-letter code: Probable arabinosyltransferase B (1083 aa).

13 consecutive transmembrane segments (helical) span residues V23 to L45, F222 to W239, L252 to W274, S331 to S350, L357 to W379, T421 to G443, A456 to F478, F525 to L542, A555 to A572, W576 to V598, A611 to V633, D648 to L670, and F690 to G712.

It belongs to the emb family.

Its subcellular location is the cell membrane. Its function is as follows. Arabinosyl transferase responsible for the polymerization of arabinose into the arabinan of arabinogalactan. The sequence is that of Probable arabinosyltransferase B (embB) from Mycobacterium leprae (strain TN).